Reading from the N-terminus, the 62-residue chain is Sperm protamine P1 (62 aa).

A disordered region spans residues 1-62 (MARYRHSXSR…RYSRRRRRRY (62 aa)).

It belongs to the protamine P1 family. In terms of tissue distribution, testis.

The protein localises to the nucleus. The protein resides in the chromosome. In terms of biological role, protamines substitute for histones in the chromatin of sperm during the haploid phase of spermatogenesis. They compact sperm DNA into a highly condensed, stable and inactive complex. The chain is Sperm protamine P1 (PRM1) from Petrogale xanthopus (Yellow-footed rock wallaby).